The following is a 276-amino-acid chain: Integrin-binding sialoprotein (276 aa).

A signal peptide spans methionine 1 to alanine 16. Residues histidine 54–arginine 251 are disordered. Acidic residues predominate over residues serine 61 to glycine 75. Over residues glutamine 106–serine 119 the composition is skewed to basic and acidic residues. The Cell attachment site signature appears at arginine 116 to aspartate 118. Residues glycine 120–aspartate 144 are compositionally biased toward acidic residues. Positions valine 145–valine 165 are enriched in polar residues. N-linked (GlcNAc...) asparagine glycosylation is found at asparagine 148, asparagine 153, and asparagine 162. Residues alanine 167–glutamate 188 show a composition bias toward acidic residues. Low complexity predominate over residues alanine 189–glutamate 200. A Cell attachment site motif is present at residues arginine 228–aspartate 230. Residues arginine 246–aspartate 248 carry the Integrin-binding motif motif. 2 positions are modified to sulfotyrosine: tyrosine 272 and tyrosine 273.

In terms of assembly, monomer. Interacts with integrins; the interaction promotes cell adhesion. Post-translationally, phosphorylated on serine and threonine residues.

The protein localises to the secreted. Its function is as follows. Binds tightly to hydroxyapatite. Appears to form an integral part of the mineralized matrix. Probably important to cell-matrix interaction. Promotes adhesion and migration of various cells via the alpha-V/beta-3 integrin receptor (ITGAV:ITGB3). In Gallus gallus (Chicken), this protein is Integrin-binding sialoprotein (IBSP).